A 758-amino-acid chain; its full sequence is 5-methyltetrahydropteroyltriglutamate--homocysteine methyltransferase (758 aa).

Residues 16–19 and lysine 116 contribute to the 5-methyltetrahydropteroyltri-L-glutamate site; that span reads RELK. L-homocysteine-binding positions include 436-438 and glutamate 489; that span reads IGS. L-methionine contacts are provided by residues 436–438 and glutamate 489; that span reads IGS. 5-methyltetrahydropteroyltri-L-glutamate contacts are provided by residues 520 to 521 and tryptophan 566; that span reads RC. Aspartate 604 is a binding site for L-homocysteine. Aspartate 604 is a binding site for L-methionine. Residue glutamate 610 participates in 5-methyltetrahydropteroyltri-L-glutamate binding. Histidine 646, cysteine 648, and glutamate 670 together coordinate Zn(2+). Histidine 699 functions as the Proton donor in the catalytic mechanism. Cysteine 731 serves as a coordination point for Zn(2+).

The protein belongs to the vitamin-B12 independent methionine synthase family. The cofactor is Zn(2+).

The enzyme catalyses 5-methyltetrahydropteroyltri-L-glutamate + L-homocysteine = tetrahydropteroyltri-L-glutamate + L-methionine. Its pathway is amino-acid biosynthesis; L-methionine biosynthesis via de novo pathway; L-methionine from L-homocysteine (MetE route): step 1/1. Functionally, catalyzes the transfer of a methyl group from 5-methyltetrahydrofolate to homocysteine resulting in methionine formation. This chain is 5-methyltetrahydropteroyltriglutamate--homocysteine methyltransferase, found in Xylella fastidiosa (strain M12).